A 331-amino-acid polypeptide reads, in one-letter code: MARGGRGRRLGLALGLLLALVLAPRVLRAKPTVRKERVVRPDSELGERPPEDNQSFQYDHEAFLGKEDSKTFDQLTPDESKERLGKIVDRIDNDGDGFVTTEELKTWIKRVQKRYIFDNVAKVWKDYDRDKDDKISWEEYKQATYGYYLGNPAEFHDSSDHHTFKKMLPRDERRFKAADLNGDLTATREEFTAFLHPEEFEHMKEIVVLETLEDIDKNGDGFVDQDEYIADMFSHEENGPEPDWVLSEREQFNEFRDLNKDGKLDKDEIRHWILPQDYDHAQAEARHLVYESDKNKDEKLTKEEILENWNMFVGSQATNYGEDLTKNHDEL.

An N-terminal signal peptide occupies residues 1–29 (MARGGRGRRLGLALGLLLALVLAPRVLRA). An N-linked (GlcNAc...) asparagine glycan is attached at N53. S55 is modified (phosphoserine). The residue at position 76 (T76) is a Phosphothreonine. EF-hand domains follow at residues 79–114 (ESKE…VQKR), 115–150 (YIFD…YYLG), 166–201 (KMLP…EEFE), 203–238 (MKEI…HEEN), 244–279 (WVLS…QDYD), and 280–315 (HAQA…FVGS). At S80 the chain carries Phosphoserine; by FAM20C. Residues D92, D94, D96, E103, D128, D130, D132, K134, E139, D179, N181, D183, T185, E190, D216, N218, D220, E227, D257, N259, D261, K263, E268, D293, N295, D297, K299, and E304 each contribute to the Ca(2+) site. A Prevents secretion from ER motif is present at residues 328 to 331 (HDEL).

The protein belongs to the CREC family. Post-translationally, O-glycosylated. O-mannosylated by POMT1 and POMT2 and elongated by POMGNT1.

Its subcellular location is the endoplasmic reticulum lumen. Functionally, may regulate calcium-dependent activities in the endoplasmic reticulum lumen or post-ER compartment. The polypeptide is Reticulocalbin-1 (RCN1) (Homo sapiens (Human)).